Here is a 416-residue protein sequence, read N- to C-terminus: Ribulose bisphosphate carboxylase large chain (416 aa).

Lys-5 bears the N6,N6,N6-trimethyllysine mark. Substrate contacts are provided by Asn-114 and Thr-164. The Proton acceptor role is filled by Lys-166. A substrate-binding site is contributed by Lys-168. The Mg(2+) site is built by Lys-192, Asp-194, and Glu-195. An N6-carboxylysine modification is found at Lys-192. The active-site Proton acceptor is His-285. Substrate-binding residues include Arg-286, His-318, and Ser-370.

Belongs to the RuBisCO large chain family. Type I subfamily. Heterohexadecamer of 8 large chains and 8 small chains; disulfide-linked. The disulfide link is formed within the large subunit homodimers. The cofactor is Mg(2+). The disulfide bond which can form in the large chain dimeric partners within the hexadecamer appears to be associated with oxidative stress and protein turnover.

It is found in the plastid. It localises to the chloroplast. It carries out the reaction 2 (2R)-3-phosphoglycerate + 2 H(+) = D-ribulose 1,5-bisphosphate + CO2 + H2O. The enzyme catalyses D-ribulose 1,5-bisphosphate + O2 = 2-phosphoglycolate + (2R)-3-phosphoglycerate + 2 H(+). Its function is as follows. RuBisCO catalyzes two reactions: the carboxylation of D-ribulose 1,5-bisphosphate, the primary event in carbon dioxide fixation, as well as the oxidative fragmentation of the pentose substrate in the photorespiration process. Both reactions occur simultaneously and in competition at the same active site. This chain is Ribulose bisphosphate carboxylase large chain (rbcL), found in Spigelia marilandica (Woodland pinkroot).